Reading from the N-terminus, the 1023-residue chain is MDAQIEKAIEIAWDPRSDQNLKEQAVQYLTQVRGDSSSLQACLNLFTRDPKAAEVVRLVSLDIVNNAIQTQHIDDQSLRGLKEQLHDYVRRTYASGNEVDPPALQNKLTQTLTFLFSSLYKEGWESFIRDFLSFTGHQNGTVDNLPGVVLYLRLLSSIHDEIADLMIVRAGGETKRNVELKDLVRARDVQIVAGSFQHILTYWQGNNDAIVEMTLKVIGKWVSWIDISLVVNQDILNLLFPLVGRNPNGGEDKVKDAAIDCFTEIVAKKMKPSDKIGMILFLNLGEVVSQLIASPALHDLRNTSSYDTDLAEAVAKLVNNVVSDLVKILEDTKVEPEVRAQAEQSLQTFLPLLLRFFSDEYDEICATVIPSLTELNTFLRKAQPLPPAYSAMLTPILNAIIQKMRYDDTSSYADEDELTDEAEFQELRKRLQVLQKTIAAVDEALYVDVLSNVIGNTFQRLDQQNGQIDWRDLDLALHEMYLFGELTLVNGGLYAKSQPSSIAAERLIVMMSKMVESGIASFNHPAISLQYMEICVRYCSFFENQTQYIPQVLEQFVGFVHHNHSRVRIRSWYLFHRFVKHLRGQVGNVAETIIQSISDLLPLKAEVPKESDDDMSSEDGSHDAADVAFNAQLNLYEAIGCISSTTSTPIEKQAIYARTIMNPLFSDVQRHLEQAKSGNAQAVLQIHHIIFALGSLAHGFSDWSPGEGKRAGQAPAKEITIEFSRAAEAILFALEALKSSSEIRNAARSSFSRLMGVMGVAMLPLLPRWIDGLLTQSSSKEEIGMFLRLLDQVVFGFKKDIHEVLNSLLTPLFQRVFASLSEPVTGTDDGIQLAELRREYLSFVTVILNNELGSVLVSEQNQAFFDPLVQSVTTLAKTVTNETGNLAASKIAFSVMTKMAELWGGPTIATPGQPITSSVQPQPTFPGFDTFLIERFHPVCWEVLREPHFRPMVDAQSKSVLNELAGLEHVIYMKTGNMFVEHLQGNFFPSMGVDGSGFIKSMVESPERKGLATFLQNWLKGRA.

It belongs to the exportin family.

It localises to the nucleus. The protein resides in the cytoplasm. Functionally, tRNA nucleus export receptor which facilitates tRNA translocation across the nuclear pore complex. Involved in pre-tRNA splicing, probably by affecting the interaction of pre-tRNA with splicing endonuclease. The chain is Exportin-T (los1) from Sclerotinia sclerotiorum (strain ATCC 18683 / 1980 / Ss-1) (White mold).